The chain runs to 95 residues: uncharacterized protein (95 aa).

Positions methionine 1–leucine 73 are disordered. Polar residues-rich tracts occupy residues serine 42–proline 52 and glycine 62–leucine 73.

This is an uncharacterized protein from Homo sapiens (Human).